Consider the following 54-residue polypeptide: Ovomucoid (54 aa).

The Kazal-like domain maps to 4–54 (VDCSEYPKPACTLEHRPLCGSDNKTYGNKCNFCNAVVESNGTLTLSHFGKC). 3 cysteine pairs are disulfide-bonded: C6/C36, C14/C33, and C22/C54. N43 carries an N-linked (GlcNAc...) asparagine glycan.

It localises to the secreted. This chain is Ovomucoid, found in Pavo muticus (Green peafowl).